Consider the following 34-residue polypeptide: Photosystem II reaction center protein Psb30 (34 aa).

A helical transmembrane segment spans residues 7 to 27 (VAQLLALFVIITSGPAIIILI).

This sequence belongs to the Psb30/Ycf12 family. As to quaternary structure, PSII is composed of 1 copy each of membrane proteins PsbA, PsbB, PsbC, PsbD, PsbE, PsbF, PsbH, PsbI, PsbJ, PsbK, PsbL, PsbM, PsbT, PsbX, PsbY, PsbZ, Psb30/Ycf12, peripheral proteins of the oxygen-evolving complex and a large number of cofactors. It forms dimeric complexes.

It is found in the plastid. Its subcellular location is the chloroplast thylakoid membrane. Its function is as follows. A core subunit of photosystem II (PSII), probably helps stabilize the reaction center. This Guillardia theta (Cryptophyte) protein is Photosystem II reaction center protein Psb30.